A 377-amino-acid chain; its full sequence is Phospho-N-acetylmuramoyl-pentapeptide-transferase (377 aa).

10 helical membrane-spanning segments follow: residues 2–22 (IQLL…TPAL), 55–75 (VAIL…SVLA), 82–102 (ITLS…VGFL), 122–142 (MVLQ…FPDA), 162–182 (LAFA…NLIA), 195–215 (LDGL…LITL), 236–256 (PMDL…FLWW), 263–283 (IFMG…FAVL), 288–308 (LLLV…ILQV), and 343–363 (FWVI…GDWL).

It belongs to the glycosyltransferase 4 family. MraY subfamily. Requires Mg(2+) as cofactor.

The protein localises to the cell membrane. It carries out the reaction UDP-N-acetyl-alpha-D-muramoyl-L-alanyl-gamma-D-glutamyl-meso-2,6-diaminopimeloyl-D-alanyl-D-alanine + di-trans,octa-cis-undecaprenyl phosphate = di-trans,octa-cis-undecaprenyl diphospho-N-acetyl-alpha-D-muramoyl-L-alanyl-D-glutamyl-meso-2,6-diaminopimeloyl-D-alanyl-D-alanine + UMP. Its pathway is cell wall biogenesis; peptidoglycan biosynthesis. Its function is as follows. Catalyzes the initial step of the lipid cycle reactions in the biosynthesis of the cell wall peptidoglycan: transfers peptidoglycan precursor phospho-MurNAc-pentapeptide from UDP-MurNAc-pentapeptide onto the lipid carrier undecaprenyl phosphate, yielding undecaprenyl-pyrophosphoryl-MurNAc-pentapeptide, known as lipid I. This is Phospho-N-acetylmuramoyl-pentapeptide-transferase from Kocuria rhizophila (strain ATCC 9341 / DSM 348 / NBRC 103217 / DC2201).